The primary structure comprises 302 residues: Recombination-associated protein RdgC (302 aa).

The protein belongs to the RdgC family.

Its subcellular location is the cytoplasm. It localises to the nucleoid. Functionally, may be involved in recombination. The sequence is that of Recombination-associated protein RdgC from Xanthomonas campestris pv. campestris (strain 8004).